The chain runs to 250 residues: FAS1 domain-containing protein AER383W (250 aa).

An N-terminal signal peptide occupies residues 1–18 (MRLKTILLGFCAFHVARS). One can recognise an FAS1 domain in the interval 87 to 247 (GVTLDDRLQS…GIVLVIDSSL (161 aa)).

The protein resides in the vacuole. This is FAS1 domain-containing protein AER383W from Eremothecium gossypii (strain ATCC 10895 / CBS 109.51 / FGSC 9923 / NRRL Y-1056) (Yeast).